The chain runs to 66 residues: SPbeta prophage-derived uncharacterized protein YopM (66 aa).

This Bacillus subtilis (strain 168) protein is SPbeta prophage-derived uncharacterized protein YopM (yopM).